The following is a 268-amino-acid chain: Receptor expression-enhancing protein 2 (268 aa).

2 helical membrane-spanning segments follow: residues 1 to 21 (MVSWIISRMVVLAFGTLYPAY) and 35 to 55 (YVKWMMYWIVFALFTTAETIT). The interval 170–268 (GDDTHTAATL…TTANNVAESP (99 aa)) is disordered. A compositionally biased stretch (low complexity) spans 180–196 (PRAKTATRTVRATPVPA). Residues 199-216 (ESQHSSRSDDQSDSRTEH) show a composition bias toward basic and acidic residues. Over residues 228–248 (RIAITRAAKKPAAAKTEQTTK) the composition is skewed to low complexity. Residues 249–258 (TVKKAPKKKP) show a composition bias toward basic residues.

Belongs to the DP1 family. Interacts with odorant receptor proteins.

The protein localises to the membrane. Its function is as follows. May enhance the cell surface expression of odorant receptors. The polypeptide is Receptor expression-enhancing protein 2 (reep2) (Danio rerio (Zebrafish)).